The chain runs to 458 residues: NALCN channel auxiliary factor 1 (458 aa).

The chain crosses the membrane as a helical span at residues 40-60 (LSLASLLFFTVLLSDHLWFCA). The segment at 70-155 (KEHQQQQRQQ…NRGKDDRGKA (86 aa)) is disordered. Positions 75-96 (QQRQQQQQQQQQRQRQQQQQQR) are enriched in low complexity. The span at 136–145 (GDGGGGGGKG) shows a compositional bias: gly residues. Cystine bridges form between Cys191/Cys261, Cys226/Cys313, Cys246/Cys261, Cys304/Cys341, Cys324/Cys377, Cys330/Cys376, and Cys334/Cys361. N-linked (GlcNAc...) asparagine glycosylation occurs at Asn217. Residues 417-437 (LKLCVLVLILLHTVLTASAAQ) form a helical membrane-spanning segment.

Belongs to the NALF family. As to quaternary structure, component of the NALCN channel complex. NALCN complex consists of NALCN and auxiliary subunits, UNC79, UNC80 and NACL1. These auxiliary subunits are essential for the NALCN channel function.

It is found in the cell membrane. In terms of biological role, auxillary component of the NALCN sodium channel complex, a channel that regulates the resting membrane potential and controls neuronal excitability. The chain is NALCN channel auxiliary factor 1 from Homo sapiens (Human).